The sequence spans 181 residues: Transcription termination/antitermination protein NusG (181 aa).

In terms of domain architecture, KOW spans 130–161 (PGEMVRVNDGPFADFNGVVEEVDYEKSRLKVS).

The protein belongs to the NusG family. In terms of assembly, monomer. Interacts with the transcription termination factor Rho and with RNA polymerase.

In terms of biological role, participates in transcription elongation, termination and antitermination. In the absence of Rho, increases the rate of transcription elongation by the RNA polymerase (RNAP), probably by partially suppressing pausing. In the presence of Rho, modulates most Rho-dependent termination events by interacting with the RNAP to render the complex more susceptible to the termination activity of Rho. May be required to overcome a kinetic limitation of Rho to function at certain terminators. Also involved in ribosomal RNA transcriptional antitermination. The protein is Transcription termination/antitermination protein NusG of Shigella flexneri.